A 398-amino-acid chain; its full sequence is MDTQAIKHSVQHSGRYNRKGFESPTQRAKALGESYQSDLIASIRENNFSFEKGRLKIKLAKSFGFCWGVERAVAMAYETRRHYPNEDIWMTNEIIHNPSVNNHLSRMNVKIISAKNGIKDFSSVSTGDVVILPAFGATVQEMQLLHEKKCQIIDTTCPWVSKVWHTVEKHKKHTFTSIIHGKYKHEETLATRSFAGNYLVVFDLDEAEYVSNYIQGHGDKNKFMNKFAKACSDGFDPDVHLERIGVANQTTMLKSETEEIGKFFEKTMLMKYGPANINDHFLAFNTICDATEERQDAMFSLVNEDLDILVVIGGFNSSNTTHLQEIAISNNIESFHIDISDRISVENNSICHKPLESELILKKNFIPDGKIKVGITSGASTPDKIVADVIEKLIAITQ.

Residue Cys66 participates in [4Fe-4S] cluster binding. His96 is a binding site for (2E)-4-hydroxy-3-methylbut-2-enyl diphosphate. Residue His96 participates in dimethylallyl diphosphate binding. Position 96 (His96) interacts with isopentenyl diphosphate. Position 157 (Cys157) interacts with [4Fe-4S] cluster. His185 is a (2E)-4-hydroxy-3-methylbut-2-enyl diphosphate binding site. Residue His185 coordinates dimethylallyl diphosphate. His185 lines the isopentenyl diphosphate pocket. The active-site Proton donor is the Glu187. Thr250 is a (2E)-4-hydroxy-3-methylbut-2-enyl diphosphate binding site. Residue Cys288 coordinates [4Fe-4S] cluster. Positions 317, 318, 319, and 380 each coordinate (2E)-4-hydroxy-3-methylbut-2-enyl diphosphate. The dimethylallyl diphosphate site is built by Ser317, Ser318, Asn319, and Ser380. The isopentenyl diphosphate site is built by Ser317, Ser318, Asn319, and Ser380.

The protein belongs to the IspH family. It depends on [4Fe-4S] cluster as a cofactor.

It catalyses the reaction isopentenyl diphosphate + 2 oxidized [2Fe-2S]-[ferredoxin] + H2O = (2E)-4-hydroxy-3-methylbut-2-enyl diphosphate + 2 reduced [2Fe-2S]-[ferredoxin] + 2 H(+). The catalysed reaction is dimethylallyl diphosphate + 2 oxidized [2Fe-2S]-[ferredoxin] + H2O = (2E)-4-hydroxy-3-methylbut-2-enyl diphosphate + 2 reduced [2Fe-2S]-[ferredoxin] + 2 H(+). Its pathway is isoprenoid biosynthesis; dimethylallyl diphosphate biosynthesis; dimethylallyl diphosphate from (2E)-4-hydroxy-3-methylbutenyl diphosphate: step 1/1. It functions in the pathway isoprenoid biosynthesis; isopentenyl diphosphate biosynthesis via DXP pathway; isopentenyl diphosphate from 1-deoxy-D-xylulose 5-phosphate: step 6/6. Functionally, catalyzes the conversion of 1-hydroxy-2-methyl-2-(E)-butenyl 4-diphosphate (HMBPP) into a mixture of isopentenyl diphosphate (IPP) and dimethylallyl diphosphate (DMAPP). Acts in the terminal step of the DOXP/MEP pathway for isoprenoid precursor biosynthesis. In Prochlorococcus marinus (strain MIT 9515), this protein is 4-hydroxy-3-methylbut-2-enyl diphosphate reductase.